The sequence spans 165 residues: uncharacterized protein (165 aa).

A helical transmembrane segment spans residues 20-40 (INLIASIVLWLLFVITVIGTF). N-linked (GlcNAc...) asparagine; by host glycosylation occurs at N51. Residues 97-117 (VGIIVILIFMLMIIMNGFYQM) traverse the membrane as a helical segment.

Its subcellular location is the membrane. This is an uncharacterized protein from Acanthamoeba polyphaga (Amoeba).